The chain runs to 175 residues: Gamma-crystallin B (175 aa).

Beta/gamma crystallin 'Greek key' domains follow at residues 2 to 40 (GKIT…RVES) and 41 to 83 (GCWM…HLIP). The tract at residues 84-88 (PHSGT) is connecting peptide. Beta/gamma crystallin 'Greek key' domains lie at 89 to 129 (YRMK…NVLE) and 130 to 172 (GSWI…RRVM).

Belongs to the beta/gamma-crystallin family. As to quaternary structure, monomer.

Its function is as follows. Crystallins are the dominant structural components of the vertebrate eye lens. In Macaca mulatta (Rhesus macaque), this protein is Gamma-crystallin B (CRYGB).